Here is a 163-residue protein sequence, read N- to C-terminus: UPF0763 protein CJJ81176_1011 (163 aa).

The protein belongs to the UPF0763 family.

The protein is UPF0763 protein CJJ81176_1011 of Campylobacter jejuni subsp. jejuni serotype O:23/36 (strain 81-176).